The following is a 368-amino-acid chain: MAGCVARRALAVGSRWWSRSLATTRGSRPLCAVGGAGGLPPVATATTRRHLSSRNRAEGKVLETVGVFEVPKQNGKYETGQLFLHSVFGYRGVVLFPWQARLYDRDVASATPEKAENPAGHGSKEVKGKTHTYYQVLIDARDCPHISQRSQTEAVTFLANHDDSRALYAIPGLDYVSHEDILPYTSTDQVPIQHELFERFLLYDQTKAPPFVARETLRAWQEKNHPWLELSDVHRETTENIRVTVIPFYMGMREAQNSHVYWWRYCIRLENLDSDVVQLRERHWRIFSLSGTLETVRGRGVVGREPVLSKEQPAFQYSSHVSLQASSGHMWGTFRFERPDGSHFDVRIPPFSLESNKDEKTPPSGLHW.

The transit peptide at 1–21 (MAGCVARRALAVGSRWWSRSL) directs the protein to the mitochondrion. Positions 235–360 (RETTENIRVT…FSLESNKDEK (126 aa)) constitute an ApaG domain. T292 bears the Phosphothreonine mark.

As to quaternary structure, interacts with PCNA and POLD2. Interacts with SSBP1. Interacts with PRIMPOL; leading to enhance DNA polymerase activity of PRIMPOL. Interacts with POLH. Interacts with POLD1; leading to stimulate DNA polymerase activity of POLD1.

It is found in the mitochondrion matrix. It localises to the nucleus. Its function is as follows. Involved in DNA damage tolerance by regulating translesion synthesis (TLS) of templates carrying DNA damage lesions such as 8oxoG and abasic sites. May act by stimulating activity of DNA polymerases involved in TLS, such as PRIMPOL and polymerase delta (POLD1). The polypeptide is Polymerase delta-interacting protein 2 (Mus musculus (Mouse)).